The following is a 164-amino-acid chain: Diphosphoinositol polyphosphate phosphohydrolase 3-alpha (164 aa).

Residues arginine 9, 17–19 (KKR), and 38–40 (SSR) contribute to the substrate site. One can recognise a Nudix hydrolase domain in the interval 17-144 (KKRAACLCFR…VHAEYLEKLK (128 aa)). Mg(2+)-binding residues include glycine 49 and glutamate 65. A Nudix box motif is present at residues 50–71 (GGMEPEEEPDGAAVREVYEEAG). Glutamate 68 acts as the Proton acceptor in catalysis. Glutamate 69 serves as a coordination point for Mg(2+). Residues 89–91 (RKH), arginine 115, and lysine 133 contribute to the substrate site. The disordered stretch occupies residues 144 to 164 (KLGGSPTNGNSAAPSPPESEP).

This sequence belongs to the Nudix hydrolase family. DIPP subfamily. Requires Mg(2+) as cofactor. Mn(2+) is required as a cofactor. As to expression, mainly expressed in testis, liver kidney and, at lower level, in heart, brain, spleen, lung and skeletal muscle.

The protein localises to the cytoplasm. It catalyses the reaction diphospho-myo-inositol polyphosphate + H2O = myo-inositol polyphosphate + phosphate.. The enzyme catalyses P(1),P(6)-bis(5'-adenosyl) hexaphosphate + H2O = adenosine 5'-pentaphosphate + AMP + 2 H(+). It carries out the reaction P(1),P(5)-bis(5'-adenosyl) pentaphosphate + H2O = adenosine 5'-tetraphosphate + AMP + 2 H(+). Its function is as follows. Cleaves a beta-phosphate from the diphosphate groups in PP-InsP5 (diphosphoinositol pentakisphosphate), suggesting that it may play a role in signal transduction. Also able to catalyze the hydrolysis of dinucleoside oligophosphates, with Ap6A and Ap5A being the preferred substrates. The major reaction products are ADP and p4a from Ap6A and ADP and ATP from Ap5A. Also able to hydrolyze 5-phosphoribose 1-diphosphate; however, the relevance of such activity in vivo remains unclear. The chain is Diphosphoinositol polyphosphate phosphohydrolase 3-alpha from Mus musculus (Mouse).